The sequence spans 175 residues: Large ribosomal subunit protein uL10 (175 aa).

It belongs to the universal ribosomal protein uL10 family. Part of the ribosomal stalk of the 50S ribosomal subunit. The N-terminus interacts with L11 and the large rRNA to form the base of the stalk. The C-terminus forms an elongated spine to which L12 dimers bind in a sequential fashion forming a multimeric L10(L12)X complex.

Forms part of the ribosomal stalk, playing a central role in the interaction of the ribosome with GTP-bound translation factors. This is Large ribosomal subunit protein uL10 from Thermobifida fusca (strain YX).